A 417-amino-acid chain; its full sequence is Serine hydroxymethyltransferase (417 aa).

Residues leucine 121 and glycine 125–leucine 127 contribute to the (6S)-5,6,7,8-tetrahydrofolate site. Lysine 229 bears the N6-(pyridoxal phosphate)lysine mark. Residue serine 355 to phenylalanine 357 participates in (6S)-5,6,7,8-tetrahydrofolate binding.

It belongs to the SHMT family. As to quaternary structure, homodimer. It depends on pyridoxal 5'-phosphate as a cofactor.

The protein resides in the cytoplasm. It carries out the reaction (6R)-5,10-methylene-5,6,7,8-tetrahydrofolate + glycine + H2O = (6S)-5,6,7,8-tetrahydrofolate + L-serine. It functions in the pathway one-carbon metabolism; tetrahydrofolate interconversion. The protein operates within amino-acid biosynthesis; glycine biosynthesis; glycine from L-serine: step 1/1. Catalyzes the reversible interconversion of serine and glycine with tetrahydrofolate (THF) serving as the one-carbon carrier. This reaction serves as the major source of one-carbon groups required for the biosynthesis of purines, thymidylate, methionine, and other important biomolecules. Also exhibits THF-independent aldolase activity toward beta-hydroxyamino acids, producing glycine and aldehydes, via a retro-aldol mechanism. The chain is Serine hydroxymethyltransferase from Salmonella choleraesuis (strain SC-B67).